We begin with the raw amino-acid sequence, 482 residues long: Alanine aminotransferase 2 (482 aa).

Lys-299 bears the N6-(pyridoxal phosphate)lysine mark.

It belongs to the class-I pyridoxal-phosphate-dependent aminotransferase family. Alanine aminotransferase subfamily. Homodimer. It depends on pyridoxal 5'-phosphate as a cofactor.

It carries out the reaction L-alanine + 2-oxoglutarate = pyruvate + L-glutamate. It functions in the pathway photosynthesis; C4 acid pathway. The protein operates within amino-acid degradation; L-alanine degradation via transaminase pathway; pyruvate from L-alanine: step 1/1. Its function is as follows. Transfer of C3 units between the cytosol of mesophyll and bundle sheath cells to maintain a nitrogen-carbon balance in the C4-dicarboxylic pathway. In Hordeum vulgare (Barley), this protein is Alanine aminotransferase 2.